The following is a 389-amino-acid chain: Phospho-N-acetylmuramoyl-pentapeptide-transferase (389 aa).

10 helical membrane-spanning segments follow: residues Arg25–Ile45, Thr73–Leu93, Phe97–Tyr117, Phe135–Ala155, Ile190–Ala210, Gly222–Met242, Ala259–Phe279, Phe287–Val307, Ile311–Val331, and Gln366–Leu386.

It belongs to the glycosyltransferase 4 family. MraY subfamily. Mg(2+) is required as a cofactor.

It is found in the cell inner membrane. The enzyme catalyses UDP-N-acetyl-alpha-D-muramoyl-L-alanyl-gamma-D-glutamyl-meso-2,6-diaminopimeloyl-D-alanyl-D-alanine + di-trans,octa-cis-undecaprenyl phosphate = di-trans,octa-cis-undecaprenyl diphospho-N-acetyl-alpha-D-muramoyl-L-alanyl-D-glutamyl-meso-2,6-diaminopimeloyl-D-alanyl-D-alanine + UMP. It participates in cell wall biogenesis; peptidoglycan biosynthesis. Its function is as follows. Catalyzes the initial step of the lipid cycle reactions in the biosynthesis of the cell wall peptidoglycan: transfers peptidoglycan precursor phospho-MurNAc-pentapeptide from UDP-MurNAc-pentapeptide onto the lipid carrier undecaprenyl phosphate, yielding undecaprenyl-pyrophosphoryl-MurNAc-pentapeptide, known as lipid I. In Paraburkholderia phytofirmans (strain DSM 17436 / LMG 22146 / PsJN) (Burkholderia phytofirmans), this protein is Phospho-N-acetylmuramoyl-pentapeptide-transferase.